The following is a 64-amino-acid chain: Large ribosomal subunit protein bL35 (64 aa).

The protein belongs to the bacterial ribosomal protein bL35 family.

This Micrococcus luteus (strain ATCC 4698 / DSM 20030 / JCM 1464 / CCM 169 / CCUG 5858 / IAM 1056 / NBRC 3333 / NCIMB 9278 / NCTC 2665 / VKM Ac-2230) (Micrococcus lysodeikticus) protein is Large ribosomal subunit protein bL35.